Reading from the N-terminus, the 530-residue chain is MEIKNSPSSLSSPASYNCSQSILPLEHGPIYIPSSYVDNRHEYSAMTFYSPAVMNYSVPGSTSNLDGGPVRLSTSPNVLWPTSGHLSPLATHCQSSLLYAEPQKSPWCEARSLEHTLPVNRETLKRKLSGSSCASPVTSPNAKRDAHFCPVCSDYASGYHYGVWSCEGCKAFFKRSIQGHNDYICPATNQCTIDKNRRKSCQACRLRKCYEVGMVKCGSRRERCGYRIVRRQRSSSEQVHCLSKAKRNGGHAPRVKELLLSTLSPEQLVLTLLEAEPPNVLVSRPSMPFTEASMMMSLTKLADKELVHMIGWAKKIPGFVELSLLDQVRLLESCWMEVLMVGLMWRSIDHPGKLIFAPDLVLDRDEGKCVEGILEIFDMLLATTSRFRELKLQHKEYLCVKAMILLNSSMYPLASANQEAESSRKLTHLLNAVTDALVWVIAKSGISSQQQSVRLANLLMLLSHVRHISNKGMEHLLSMKCKNVVPVYDLLLEMLNAHTLRGYKSSISGSECSSTEDSKNKESSQNLQSQ.

The interval Met1 to Phe148 is modulating. Ser61 carries the phosphoserine; alternate modification. The O-linked (GlcNAc) serine; alternate glycan is linked to Ser61. 2 positions are modified to phosphoserine; by MAPK: Ser87 and Ser105. 2 consecutive NR C4-type zinc fingers follow at residues Cys149–Cys169 and Cys185–Cys209. Positions Cys149 to Met214 form a DNA-binding region, nuclear receptor. An NR LBD domain is found at Ser264 to His498. The span at Ser506–Thr515 shows a compositional bias: low complexity. Residues Ser506–Gln530 form a disordered region.

It belongs to the nuclear hormone receptor family. NR3 subfamily. As to quaternary structure, binds DNA as a homodimer. Can form a heterodimer with ESR1. Interacts with NCOA1, NCOA3, NCOA5 and NCOA6 coactivators, leading to a strong increase of transcription of target genes. Interacts with UBE1C and AKAP13. Interacts with DNTTIP2. Interacts with CCDC62 in the presence of estradiol/E2; this interaction seems to enhance the transcription of target genes. Interacts with PRMT2. Interacts with CCAR2 (via N-terminus) in a ligand-independent manner. Interacts with DNAAF4. Interacts with RBM39, in the presence of estradiol (E2). Interacts with STUB1/CHIP. Phosphorylation at Ser-87 and Ser-105 recruits NCOA1. In terms of tissue distribution, expressed in the CA1 region of the hippocampus, expression decreases with age (at protein level). Expressed in prostate, ovary, lung, liver, kidney, fat, bone, brain, uterus and testis.

Its subcellular location is the nucleus. In terms of biological role, nuclear hormone receptor. Binds estrogens with an affinity similar to that of ESR1/ER-alpha, and activates expression of reporter genes containing estrogen response elements (ERE) in an estrogen-dependent manner. Its function is as follows. Lacks ligand binding affinity and suppresses ESR1/ER-alpha and ESR2 isoform 1/ER-beta1 mediated transcriptional activation and may act as a dominant negative regulator of estrogen action. Functionally, unable to bind DNA and activate transcription due to the truncation of the DNA binding domain. This chain is Estrogen receptor beta (Esr2), found in Rattus norvegicus (Rat).